The primary structure comprises 895 residues: Probable aminodeoxychorismate synthase, chloroplastic (895 aa).

Positions 1-45 (MAALRLPTPPPPRAPAPWLHSSHRRRVAAPRGAGGGGGGGGAVPP) are disordered. The N-terminal 48 residues, 1–48 (MAALRLPTPPPPRAPAPWLHSSHRRRVAAPRGAGGGGGGGGAVPPPPV), are a transit peptide targeting the chloroplast. Over residues 32 to 42 (GAGGGGGGGGA) the composition is skewed to gly residues. Residues 49-307 (RTLLIDNYDS…KKITTDFGLQ (259 aa)) enclose the Glutamine amidotransferase type-1 domain. Residue Cys-135 is the Nucleophile of the active site. Catalysis depends on residues His-281 and Glu-283. Residues 387–875 (IFSVLFGHHS…KAKAPTKVVE (489 aa)) form a PABB component region.

In the C-terminal section; belongs to the anthranilate synthase component I family.

It is found in the plastid. It localises to the chloroplast. The enzyme catalyses chorismate + L-glutamine = 4-amino-4-deoxychorismate + L-glutamate. Its pathway is cofactor biosynthesis; tetrahydrofolate biosynthesis; 4-aminobenzoate from chorismate: step 1/2. It functions in the pathway antibiotic biosynthesis; candicidin biosynthesis. Bifunctional enzyme that catalyzes the biosynthesis of 4-amino-4-deoxychorismate (ADC) from chorismate and glutamine. In the first step, a glutamine amidotransferase generates ammonia that is channelled between the binding sites of glutamine and chorismate and used along with chorismate in the second step, catalyzed by aminodeoxychorismate synthase, to produce ADC. Required for the synthesis of 4-aminobenzoate (PABA), an important component in tetrahydrofolate biosynthesis. Does not possess ADC lyase activity. This chain is Probable aminodeoxychorismate synthase, chloroplastic (ADCS), found in Oryza sativa subsp. japonica (Rice).